The sequence spans 687 residues: RNA-binding protein VTS1 (687 aa).

Positions 1-10 (MASHTLRPHR) are enriched in basic residues. Disordered regions lie at residues 1–115 (MASH…TPEA), 248–341 (AAAK…PGIG), and 526–598 (SPFN…AGVA). The span at 29–41 (TRQSLGPPTSGNS) shows a compositional bias: polar residues. Residues 52-68 (GLASPSSPSQPRHVSSS) are compositionally biased toward low complexity. Residues 287–301 (GLESNMSGRSRSKSP) show a composition bias toward polar residues. Positions 305–324 (PRPKSTDFSGKPRESLRRES) are enriched in basic and acidic residues. Over residues 526–539 (SPFNASAPSLQPGL) the composition is skewed to polar residues. Positions 550-566 (QSSHLNQHYNQHQQQHQ) are enriched in low complexity. Over residues 585–597 (QTGGGGAGGGAGV) the composition is skewed to gly residues. The SAM domain occupies 606–667 (KVLEDVPNWL…LKVFYNVRTK (62 aa)).

This sequence belongs to the VTS1 family. As to quaternary structure, monomer. Binds to RNA.

It localises to the cytoplasm. The protein resides in the cytosol. It is found in the P-body. RNA-binding protein involved in post-transcriptional regulation through transcript degradation. The polypeptide is RNA-binding protein VTS1 (Cryptococcus neoformans var. grubii serotype A (strain H99 / ATCC 208821 / CBS 10515 / FGSC 9487) (Filobasidiella neoformans var. grubii)).